The chain runs to 159 residues: SsrA-binding protein (159 aa).

Positions 131–159 (KGKKLHDKRESEKERDWNRQKSRLLKDNG) are disordered. The segment covering 137–159 (DKRESEKERDWNRQKSRLLKDNG) has biased composition (basic and acidic residues).

Belongs to the SmpB family.

Its subcellular location is the cytoplasm. Its function is as follows. Required for rescue of stalled ribosomes mediated by trans-translation. Binds to transfer-messenger RNA (tmRNA), required for stable association of tmRNA with ribosomes. tmRNA and SmpB together mimic tRNA shape, replacing the anticodon stem-loop with SmpB. tmRNA is encoded by the ssrA gene; the 2 termini fold to resemble tRNA(Ala) and it encodes a 'tag peptide', a short internal open reading frame. During trans-translation Ala-aminoacylated tmRNA acts like a tRNA, entering the A-site of stalled ribosomes, displacing the stalled mRNA. The ribosome then switches to translate the ORF on the tmRNA; the nascent peptide is terminated with the 'tag peptide' encoded by the tmRNA and targeted for degradation. The ribosome is freed to recommence translation, which seems to be the essential function of trans-translation. This chain is SsrA-binding protein, found in Rhizobium leguminosarum bv. trifolii (strain WSM2304).